Consider the following 546-residue polypeptide: Chaperonin GroEL (546 aa).

ATP is bound by residues 30-33 (TLGP), Lys-51, 87-91 (DGTTT), Gly-415, and Asp-495.

This sequence belongs to the chaperonin (HSP60) family. Forms a cylinder of 14 subunits composed of two heptameric rings stacked back-to-back. Interacts with the co-chaperonin GroES.

The protein localises to the cytoplasm. It catalyses the reaction ATP + H2O + a folded polypeptide = ADP + phosphate + an unfolded polypeptide.. In terms of biological role, together with its co-chaperonin GroES, plays an essential role in assisting protein folding. The GroEL-GroES system forms a nano-cage that allows encapsulation of the non-native substrate proteins and provides a physical environment optimized to promote and accelerate protein folding. The polypeptide is Chaperonin GroEL (Brucella suis (strain ATCC 23445 / NCTC 10510)).